The chain runs to 372 residues: DNA replication and repair protein RecF (372 aa).

Residue 30 to 37 (GENAQGKT) participates in ATP binding.

Belongs to the RecF family.

It is found in the cytoplasm. Functionally, the RecF protein is involved in DNA metabolism; it is required for DNA replication and normal SOS inducibility. RecF binds preferentially to single-stranded, linear DNA. It also seems to bind ATP. The sequence is that of DNA replication and repair protein RecF from Geobacillus thermodenitrificans (strain NG80-2).